The primary structure comprises 324 residues: Porphobilinogen deaminase 1 (324 aa).

Cys249 is subject to S-(dipyrrolylmethanemethyl)cysteine.

The protein belongs to the HMBS family. As to quaternary structure, monomer. Dipyrromethane is required as a cofactor.

The enzyme catalyses 4 porphobilinogen + H2O = hydroxymethylbilane + 4 NH4(+). The protein operates within porphyrin-containing compound metabolism; protoporphyrin-IX biosynthesis; coproporphyrinogen-III from 5-aminolevulinate: step 2/4. In terms of biological role, tetrapolymerization of the monopyrrole PBG into the hydroxymethylbilane pre-uroporphyrinogen in several discrete steps. The chain is Porphobilinogen deaminase 1 (hemC1) from Streptomyces avermitilis (strain ATCC 31267 / DSM 46492 / JCM 5070 / NBRC 14893 / NCIMB 12804 / NRRL 8165 / MA-4680).